The following is a 318-amino-acid chain: Potassium channel subfamily K member 15 (318 aa).

Over 1–8 the chain is Cytoplasmic; sequence MRKQSART. A helical membrane pass occupies residues 9-29; the sequence is AALILCILSYLLVGAAVFDAL. Positions 80–101 form an intramembrane region, pore-forming; it reads FAGSFYFAITVITTIGYGHAAP. Residues 108–128 form a helical membrane-spanning segment; it reads VFCMFYALLGIPLTLVTFQSL. Residues 129-158 lie on the Cytoplasmic side of the membrane; sequence GERLNALVRCLLLAAKRCLGLRRPHVSAEN. The helical transmembrane segment at 159–179 threads the bilayer; the sequence is MVVAGLLLCAATLALGAAAFA. An intramembrane region (pore-forming) is located at residues 189 to 209; sequence AYYYCFITLTTIGFGDFVALQ. The chain crosses the membrane as a helical span at residues 223–243; it reads FSFLYILLGLTVIGAFLNLVV. At 244 to 318 the chain is on the cytoplasmic side; sequence LRFLASAEAP…DRLRARRKSI (75 aa). The segment at 296 to 318 is disordered; the sequence is LSPEAVHDCHSSPDRLRARRKSI. Basic and acidic residues predominate over residues 300-311; the sequence is AVHDCHSSPDRL.

This sequence belongs to the two pore domain potassium channel (TC 1.A.1.8) family. In terms of assembly, heterodimer. In terms of processing, phosphorylated. As to expression, brain-specific. Highly expressed in auditory nuclei, in Purkinje cells and in olfactory bulb mitral cells.

It localises to the membrane. Its function is as follows. Probable potassium channel subunit. No channel activity observed in heterologous systems. May need to associate with another protein to form a functional channel. This chain is Potassium channel subfamily K member 15 (Kcnk15), found in Rattus norvegicus (Rat).